The sequence spans 359 residues: Popy class I histocompatibility antigen, alpha chain E (359 aa).

A signal peptide spans 1-18; the sequence is GTLLLLLSEALALTETWA. The tract at residues 19–108 is alpha-1; it reads GSHSLKYFHT…LRGYYNQTEA (90 aa). Residues 19–302 are Extracellular-facing; the sequence is GSHSLKYFHT…EPASQTTIPI (284 aa). N104 is a glycosylation site (N-linked (GlcNAc...) asparagine). An alpha-2 region spans residues 109–200; it reads GSHTLQWMHG…EKGKETLLHL (92 aa). 2 cysteine pairs are disulfide-bonded: C119–C182 and C221–C277. The segment at 201 to 292 is alpha-3; it reads DPPKTHVTHH…GLPEPLTLRW (92 aa). Positions 203 to 291 constitute an Ig-like C1-type domain; it reads PKTHVTHHRI…EGLPEPLTLR (89 aa). Positions 293–302 are connecting peptide; it reads EPASQTTIPI. The chain crosses the membrane as a helical span at residues 303–326; that stretch reads VGIFAGLVLLGAVVTGATVVAAVM. At 327–359 the chain is on the cytoplasmic side; sequence WRKKSSGGKGGSYSKAEWSDSAQGSESLTACKA. A disordered region spans residues 330–359; that stretch reads KSSGGKGGSYSKAEWSDSAQGSESLTACKA. Residues 346-359 are compositionally biased toward polar residues; it reads DSAQGSESLTACKA. S351 carries the phosphoserine modification.

The protein belongs to the MHC class I family. As to quaternary structure, heterodimer of an alpha chain and a beta chain (beta-2-microglobulin).

The protein resides in the membrane. Its function is as follows. Involved in the presentation of foreign antigens to the immune system. The polypeptide is Popy class I histocompatibility antigen, alpha chain E (Popy-E) (Pongo pygmaeus (Bornean orangutan)).